The following is an 810-amino-acid chain: Fibroblast growth factor receptor 1-A (810 aa).

A signal peptide spans 1 to 26 (MKMMMIMKTTLLLISVLLTQALQSQG). The Extracellular portion of the chain corresponds to 27–363 (RPAIQDEAPA…TQLPNQTYLE (337 aa)). 3 consecutive Ig-like C2-type domains span residues 28 to 115 (PAIQ…FNIS), 147 to 235 (PDKM…YQLD), and 244 to 346 (PILQ…AWLT). An intrachain disulfide couples C53 to C99. N-linked (GlcNAc...) asparagine glycosylation is found at N107, N113, N216, N229, N253, N285, N306, N319, and N358. C167 and C219 are disulfide-bonded. An intrachain disulfide couples C266 to C330. A helical transmembrane segment spans residues 364-384 (VLIYCVGFFLICVMVGTAVLA). The Cytoplasmic segment spans residues 385–810 (KMHSSAKKSD…PNRGVAFKKR (426 aa)). Y450 carries the phosphotyrosine; by autocatalysis modification. The Protein kinase domain maps to 465 to 754 (LVLGKPLGEG…LSMTSNQEYL (290 aa)). ATP-binding positions include 471–477 (LGEGCFG), K501, 549–551 (EFA), and N555. Phosphotyrosine; by autocatalysis occurs at positions 570 and 572. Residue D610 is the Proton acceptor of the active site. ATP is bound by residues R614 and D628. 4 positions are modified to phosphotyrosine; by autocatalysis: Y640, Y641, Y717, and Y753. The interval 787–810 (AGADEPCLPKFPPHPNRGVAFKKR) is disordered.

The protein belongs to the protein kinase superfamily. Tyr protein kinase family. Fibroblast growth factor receptor subfamily. Monomer. Homodimer after ligand binding. Interacts with cnpy1. Autophosphorylated. Binding of FGF family members together with heparan sulfate proteoglycan or heparin promotes receptor dimerization and autophosphorylation on tyrosine residues. Autophosphorylation occurs in trans between the two FGFR molecules present in the dimer and proceeds in a highly ordered manner. Phosphotyrosine residues provide docking sites for interacting proteins and so are crucial for FGFR1 function and its regulation. In terms of processing, ubiquitinated. FGFR1 is rapidly ubiquitinated after autophosphorylation, leading to internalization and degradation. Post-translationally, N-glycosylated in the endoplasmic reticulum. The N-glycan chains undergo further maturation to an Endo H-resistant form in the Golgi apparatus. In terms of tissue distribution, initially expressed in adaxial mesoderm with transcripts distinctly localized to the anterior portion of each half-somite. Hereupon, also strongly expressed in the otic vesicles, branchial arches and the brain, especially at the midbrain-hindbrain boundary (MHB).

The protein resides in the cell membrane. Its subcellular location is the nucleus. The protein localises to the cytoplasm. It is found in the cytosol. It localises to the cytoplasmic vesicle. It catalyses the reaction L-tyrosyl-[protein] + ATP = O-phospho-L-tyrosyl-[protein] + ADP + H(+). With respect to regulation, present in an inactive conformation in the absence of bound ligand. Ligand binding leads to dimerization and activation by sequential autophosphorylation on tyrosine residues. Tyrosine-protein kinase that acts as a cell-surface receptor for fibroblast growth factors and plays an essential role in the regulation of embryonic development, cell proliferation, differentiation and migration. Required for normal mesoderm patterning and normal skeletogenesis. Phosphorylates PLCG1, FRS2, GAB1 and SHB. Ligand binding leads to the activation of several signaling cascades. Activation of PLCG1 leads to the production of the cellular signaling molecules diacylglycerol and inositol-1,4,5-trisphosphate. Phosphorylation of FRS2 triggers recruitment of GRB2, GAB1, PIK3R1 and SOS1, and mediates activation of RAS, MAPK1/ERK2, MAPK3/ERK1 and the MAP kinase signaling pathway, as well as of the AKT1 signaling pathway. Promotes phosphorylation of SHC1, STAT1 and PTPN11/SHP2. In the nucleus, enhances RPS6KA1 and CREB1 activity and contributes to the regulation of transcription. FGFR1 signaling is down-regulated by ubiquitination, internalization and degradation. The chain is Fibroblast growth factor receptor 1-A (fgfr1a) from Danio rerio (Zebrafish).